We begin with the raw amino-acid sequence, 121 residues long: Large ribosomal subunit protein bL20 (121 aa).

This sequence belongs to the bacterial ribosomal protein bL20 family.

In terms of biological role, binds directly to 23S ribosomal RNA and is necessary for the in vitro assembly process of the 50S ribosomal subunit. It is not involved in the protein synthesizing functions of that subunit. This Polynucleobacter asymbioticus (strain DSM 18221 / CIP 109841 / QLW-P1DMWA-1) (Polynucleobacter necessarius subsp. asymbioticus) protein is Large ribosomal subunit protein bL20.